We begin with the raw amino-acid sequence, 64 residues long: Large ribosomal subunit protein bL35 (64 aa).

Disordered regions lie at residues 1–20 and 37–64; these read MPKA…TGTG and PTKR…MLNG.

This sequence belongs to the bacterial ribosomal protein bL35 family.

This chain is Large ribosomal subunit protein bL35, found in Mycobacterium sp. (strain JLS).